Here is a 309-residue protein sequence, read N- to C-terminus: Ankyrin repeat and SOCS box protein 12 (309 aa).

5 ANK repeats span residues 63–92, 96–125, 129–158, 171–200, and 213–243; these read VPGTPLRLAASYGHLSCLQVLLAHGADVDS, KAQTPLFTAVSHGHLDCVRVLLEAGASPGG, NNCSPVLTAARDGAVAILQELLDHGAEANV, SCSGPLYLAAVYGHLDCFRLLLLHGADPDY, and RPRTLLEICLHHNCEPEYIQLLIDFGANIYL. In terms of domain architecture, SOCS box spans 268 to 308; the sequence is PRSLLSQVRLVVRRALCQAGQPQAINQLDIPPMLISYLKHQ.

It belongs to the ankyrin SOCS box (ASB) family. As to quaternary structure, interacts with CUL5 and RNF7.

Its pathway is protein modification; protein ubiquitination. Functionally, probable substrate-recognition component of a SCF-like ECS (Elongin-Cullin-SOCS-box protein) E3 ubiquitin-protein ligase complex which mediates the ubiquitination and subsequent proteasomal degradation of target proteins. This is Ankyrin repeat and SOCS box protein 12 (ASB12) from Homo sapiens (Human).